Reading from the N-terminus, the 136-residue chain is Histone H3.2 (136 aa).

The tract at residues 1-43 is disordered; that stretch reads MARTKQTARKSTGGKAPRKQLATKAARKSAPATGGVKKPHRFR. N6-methylated lysine is present on lysine 5. The residue at position 10 (lysine 10) is an N6-acetyllysine; alternate. Lysine 10 carries the N6-methylated lysine; alternate modification. The residue at position 11 (serine 11) is a Phosphoserine. A Phosphothreonine modification is found at threonine 12. Lysine 15 carries the post-translational modification N6-acetyllysine. An N6-acetyllysine; alternate mark is found at lysine 19 and lysine 24. 2 positions are modified to N6-methylated lysine; alternate: lysine 19 and lysine 24. Position 28 is an N6-methylated lysine (lysine 28). A Phosphoserine modification is found at serine 29. The residue at position 37 (lysine 37) is an N6-methylated lysine.

Belongs to the histone H3 family. In terms of assembly, the nucleosome is a histone octamer containing two molecules each of H2A, H2B, H3 and H4 assembled in one H3-H4 heterotetramer and two H2A-H2B heterodimers. The octamer wraps approximately 147 bp of DNA. Post-translationally, acetylation is generally linked to gene activation. Can be acetylated to form H3K9ac, H3K14ac, H3K18ac and H3K23ac. H3K9ac could compete with H3K9me and prevent gene silencing. H3K9ac is restricted to euchromatin. Methylated to form mainly H3K4me, H3K9me, H3K18me, H3K23me, H3K27me and H3K36me. H3K4me1/2/3, H3K9me3, H3K27me3 and H3K36me1/2/3 are typical marks for euchromatin, whereas heterochromatic chromocenters are enriched in H3K9me1/2 and H3K27me1/2. H2BK143ub1 is probably prerequisite for H3K4me. In terms of processing, can be phosphorylated to form H3S10ph, H3T11ph and H3S28ph.

It is found in the nucleus. It localises to the chromosome. Its function is as follows. Core component of nucleosome. Nucleosomes wrap and compact DNA into chromatin, limiting DNA accessibility to the cellular machineries which require DNA as a template. Histones thereby play a central role in transcription regulation, DNA repair, DNA replication and chromosomal stability. DNA accessibility is regulated via a complex set of post-translational modifications of histones, also called histone code, and nucleosome remodeling. The polypeptide is Histone H3.2 (Triticum aestivum (Wheat)).